The primary structure comprises 105 residues: Saimiri transformation-associated protein (105 aa).

Over 1–75 the chain is Cytoplasmic; it reads MASEPNLRYP…GPPGPSGLPG (75 aa). Residues 1–75 are disordered; it reads MASEPNLRYP…GPPGPSGLPG (75 aa). Residues 15–74 enclose the Collagen-like domain; the sequence is GDRGPQGPPGPPGPQGPPGPQGPPGPQGPPGPQGPPGPQGPPGPQGPPGPPGPPGPSGLP. Residues 20 to 71 are compositionally biased toward pro residues; the sequence is QGPPGPPGPQGPPGPQGPPGPQGPPGPQGPPGPQGPPGPQGPPGPPGPPGPS. Residues 76–96 traverse the membrane as a helical segment; sequence LFVTNLLLGIIILLLLIIVAI. The Extracellular portion of the chain corresponds to 97-105; sequence LLVSKLVVN.

In terms of assembly, binds to host RAS and TRAF2.

The protein localises to the host membrane. Acts synergistically with Tip to stimulate NF-kappa-B activity and interleukin-2 gene expression by binding to host TRAF proteins. Activation of NF-kappa-B protects lymphocytes from apoptosis, thereby facilitating viral induced cell transformation. This chain is Saimiri transformation-associated protein, found in Saimiriine herpesvirus 2 (strain 484-77) (SaHV-2).